The following is a 396-amino-acid chain: Subtilisin-like protease 5 (396 aa).

Positions 1-20 (MTGFFTILSFSLAALSVTNA) are cleaved as a signal peptide. The propeptide occupies 21–116 (AQILSVPKGA…VEPDAIISQH (96 aa)). Positions 37–113 (YIVVMKDDTS…VAFVEPDAII (77 aa)) constitute an Inhibitor I9 domain. In terms of domain architecture, Peptidase S8 spans 125–396 (PWGLSRLSNR…SRLLYNGSGR (272 aa)). Residues aspartate 156 and histidine 187 each act as charge relay system in the active site. N-linked (GlcNAc...) asparagine glycosylation is found at asparagine 230 and asparagine 248. Residue serine 342 is the Charge relay system of the active site. Over residues 376–389 (PTIRNPGPDTTSRL) the composition is skewed to polar residues. Positions 376–396 (PTIRNPGPDTTSRLLYNGSGR) are disordered. Asparagine 392 carries N-linked (GlcNAc...) asparagine glycosylation.

It belongs to the peptidase S8 family.

It localises to the secreted. Functionally, secreted subtilisin-like serine protease with keratinolytic activity that contributes to pathogenicity. The sequence is that of Subtilisin-like protease 5 (SUB5) from Arthroderma benhamiae (strain ATCC MYA-4681 / CBS 112371) (Trichophyton mentagrophytes).